Reading from the N-terminus, the 573-residue chain is Solute carrier family 41 member 2 (573 aa).

Topologically, residues 1–162 are extracellular; it reads MTNSKGRSIT…KESSGIMALQ (162 aa). A phosphoserine mark is found at serine 136 and serine 137. Residues 163 to 183 traverse the membrane as a helical segment; that stretch reads ILVPFLLAGFGTVSAGMVLDI. Topologically, residues 184-195 are cytoplasmic; sequence VQHWEVFRKVTE. The helical transmembrane segment at 196-216 threads the bilayer; that stretch reads VFILVPALLGLKGNLEMTLAS. The Extracellular portion of the chain corresponds to 217–245; it reads RLSTAVNIGKMDSPIEKWNLIIGNLALKQ. Residues 246 to 266 form a helical membrane-spanning segment; that stretch reads VQATVVGFLAAVAAIILGWIP. At 267-282 the chain is on the cytoplasmic side; sequence EGKYYLDHSILLCSSS. A helical transmembrane segment spans residues 283 to 303; that stretch reads VATAFIASLLQGIIMVGVIVG. Topologically, residues 304 to 313 are extracellular; it reads SKKTGINPDN. A helical membrane pass occupies residues 314-334; it reads VATPIAASFGDLITLAILAWI. At 335–347 the chain is on the cytoplasmic side; the sequence is SQGLYSCLETYYY. The chain crosses the membrane as a helical span at residues 348-368; the sequence is ISPLVGVFFLALTPIWIIIAA. Residues 369 to 376 lie on the Extracellular side of the membrane; that stretch reads KHPATRTV. Residues 377–397 form a helical membrane-spanning segment; sequence LHSGWEPVITAMVISSIGGLI. Residues 398 to 406 are Cytoplasmic-facing; the sequence is LDTTVSDPN. The helical transmembrane segment at 407–427 threads the bilayer; it reads LVGIVVYTPVINGIGGNLVAI. Over 428–469 the chain is Extracellular; sequence QASRISTYLHLHSIPGELPDEPKGCYYPFRTFFGPGVNNKSA. A helical membrane pass occupies residues 470–490; that stretch reads QVLLLLVIPGHLIFLYTIHLM. Residues 491–498 are Cytoplasmic-facing; the sequence is KSGHTSLT. Residues 499–519 form a helical membrane-spanning segment; it reads IIFIVVYLFAAVLQVFTLLWI. Topologically, residues 520–543 are extracellular; the sequence is ADWMVHHFWRKGKDPDSFSIPYLT. Residues 544–564 form a helical membrane-spanning segment; sequence ALGDLLGTALLALSFHFLWLI. Topologically, residues 565–573 are cytoplasmic; sequence GDRDGDVGD.

This sequence belongs to the SLC41A transporter family.

It localises to the cell membrane. The enzyme catalyses Mg(2+)(in) = Mg(2+)(out). The catalysed reaction is Mn(2+)(in) = Mn(2+)(out). It carries out the reaction Co(2+)(in) = Co(2+)(out). It catalyses the reaction Ni(2+)(in) = Ni(2+)(out). The enzyme catalyses Fe(2+)(in) = Fe(2+)(out). In terms of biological role, acts as a plasma-membrane magnesium transporter. Can also mediate the transport of other divalent metal cations in an order of Ba(2+) &gt; Ni(2+) &gt; Co(2+) &gt; Fe(2+) &gt; Mn(2+). This Macaca fascicularis (Crab-eating macaque) protein is Solute carrier family 41 member 2 (SLC41A2).